The chain runs to 220 residues: UPF0319 protein YccT (220 aa).

A signal peptide spans 1-20 (MKTGALTTFLALCLPVTVFA).

This sequence belongs to the UPF0319 family.

This Salmonella choleraesuis (strain SC-B67) protein is UPF0319 protein YccT.